The sequence spans 95 residues: Aspartyl/glutamyl-tRNA(Asn/Gln) amidotransferase subunit C (95 aa).

Belongs to the GatC family. Heterotrimer of A, B and C subunits.

The enzyme catalyses L-glutamyl-tRNA(Gln) + L-glutamine + ATP + H2O = L-glutaminyl-tRNA(Gln) + L-glutamate + ADP + phosphate + H(+). The catalysed reaction is L-aspartyl-tRNA(Asn) + L-glutamine + ATP + H2O = L-asparaginyl-tRNA(Asn) + L-glutamate + ADP + phosphate + 2 H(+). Allows the formation of correctly charged Asn-tRNA(Asn) or Gln-tRNA(Gln) through the transamidation of misacylated Asp-tRNA(Asn) or Glu-tRNA(Gln) in organisms which lack either or both of asparaginyl-tRNA or glutaminyl-tRNA synthetases. The reaction takes place in the presence of glutamine and ATP through an activated phospho-Asp-tRNA(Asn) or phospho-Glu-tRNA(Gln). The sequence is that of Aspartyl/glutamyl-tRNA(Asn/Gln) amidotransferase subunit C from Magnetococcus marinus (strain ATCC BAA-1437 / JCM 17883 / MC-1).